The following is a 362-amino-acid chain: Homoisocitrate dehydrogenase (362 aa).

79–81 (VQS) contributes to the NADH binding site. S81 is a (2R,3S)-homoisocitrate binding site. 2 positions are modified to phosphoserine: S81 and S91. R97, R107, R126, Y133, K196, and N198 together coordinate (2R,3S)-homoisocitrate. NADH is bound at residue N198. Positions 232, 256, and 260 each coordinate Mg(2+). Residues 289 to 293 (GSAPD) and N301 each bind NADH.

This sequence belongs to the isocitrate and isopropylmalate dehydrogenases family. Requires Mg(2+) as cofactor.

It is found in the cytoplasm. The catalysed reaction is (2R,3S)-homoisocitrate + NAD(+) = 2-oxoadipate + CO2 + NADH. It functions in the pathway amino-acid biosynthesis; L-lysine biosynthesis via AAA pathway; L-alpha-aminoadipate from 2-oxoglutarate: step 4/5. The polypeptide is Homoisocitrate dehydrogenase (lys12) (Schizosaccharomyces pombe (strain 972 / ATCC 24843) (Fission yeast)).